The following is a 370-amino-acid chain: GTPase Obg (370 aa).

The 159-residue stretch at 1-159 (MKFIDEARIE…RMLRLELKVL (159 aa)) folds into the Obg domain. Residues 127 to 146 (NLHFKSSTNRAPRQKTDGKP) are disordered. The OBG-type G domain maps to 160–334 (ADVGLLGMPN…LCYAIYDYLA (175 aa)). GTP contacts are provided by residues 166–173 (GMPNAGKS), 191–195 (FTTLA), 213–216 (DIPG), 284–287 (NKLD), and 315–317 (SAL). The Mg(2+) site is built by serine 173 and threonine 193. The interval 350–370 (ADVRFRDAPPSDGGATSGGDA) is disordered.

Belongs to the TRAFAC class OBG-HflX-like GTPase superfamily. OBG GTPase family. As to quaternary structure, monomer. It depends on Mg(2+) as a cofactor.

It is found in the cytoplasm. Functionally, an essential GTPase which binds GTP, GDP and possibly (p)ppGpp with moderate affinity, with high nucleotide exchange rates and a fairly low GTP hydrolysis rate. Plays a role in control of the cell cycle, stress response, ribosome biogenesis and in those bacteria that undergo differentiation, in morphogenesis control. In Burkholderia vietnamiensis (strain G4 / LMG 22486) (Burkholderia cepacia (strain R1808)), this protein is GTPase Obg.